Reading from the N-terminus, the 188-residue chain is Elongation factor P (188 aa).

This sequence belongs to the elongation factor P family.

It is found in the cytoplasm. Its pathway is protein biosynthesis; polypeptide chain elongation. In terms of biological role, involved in peptide bond synthesis. Stimulates efficient translation and peptide-bond synthesis on native or reconstituted 70S ribosomes in vitro. Probably functions indirectly by altering the affinity of the ribosome for aminoacyl-tRNA, thus increasing their reactivity as acceptors for peptidyl transferase. The protein is Elongation factor P of Rickettsia massiliae (strain Mtu5).